The following is a 462-amino-acid chain: Nuclear distribution protein PAC1 (462 aa).

One can recognise a LisH domain in the interval 9–41 (QAEELHKAIIAYLGVINAPKTAAAFREEVNFSA). Residues 60–87 (TSVVRLQKKVLELEQRNQSLQSELDSTT) adopt a coiled-coil conformation. Residues 78-99 (SLQSELDSTTPTSLLRRNQDPS) show a composition bias toward polar residues. A disordered region spans residues 78–103 (SLQSELDSTTPTSLLRRNQDPSSWLP). WD repeat units follow at residues 113 to 154 (SHRS…RTVK), 156 to 196 (HTKG…KNIR), 200 to 247 (GHDH…CVKT), 250 to 289 (GHADWVRDVSPSFDGRWLLSAGNDQTARLWDASSGEAKCT), 292 to 352 (GHEH…IKTL), 354 to 393 (GHDNWVRALIFHPGGKYLLSASDDKTIRCWDLTQEGRCVK), 398 to 445 (AHSH…AGIR), and 447 to 462 (VIATGCVDLNVRIFAS). Positions 414–434 (KDAPTNGDAPNGTTANGASKK) are disordered.

It belongs to the WD repeat LIS1/nudF family. In terms of assembly, self-associates. Interacts with NDL1 and dynein.

It localises to the cytoplasm. Its subcellular location is the cytoskeleton. The protein resides in the spindle pole. Positively regulates the activity of the minus-end directed microtubule motor protein dynein. May enhance dynein-mediated microtubule sliding by targeting dynein to the microtubule plus end. Required for nuclear migration during vegetative growth as well as development. Required for retrograde early endosome (EE) transport from the hyphal tip. Required for localization of dynein to the mitotic spindle poles. Recruits additional proteins to the dynein complex at SPBs. This Phaeosphaeria nodorum (strain SN15 / ATCC MYA-4574 / FGSC 10173) (Glume blotch fungus) protein is Nuclear distribution protein PAC1.